Consider the following 117-residue polypeptide: Large ribosomal subunit protein bL19 (117 aa).

Belongs to the bacterial ribosomal protein bL19 family.

In terms of biological role, this protein is located at the 30S-50S ribosomal subunit interface and may play a role in the structure and function of the aminoacyl-tRNA binding site. The polypeptide is Large ribosomal subunit protein bL19 (Shewanella baltica (strain OS155 / ATCC BAA-1091)).